A 413-amino-acid polypeptide reads, in one-letter code: Adenylosuccinate synthetase (413 aa).

GTP contacts are provided by residues 11-17 and 39-41; these read GDEGKGK and GHT. Asp12 (proton acceptor) is an active-site residue. Residues Asp12 and Gly39 each contribute to the Mg(2+) site. Residues 12-15, 37-40, Thr125, Arg139, Gln217, Thr232, and Arg296 contribute to the IMP site; these read DEGK and NAGH. His40 acts as the Proton donor in catalysis. Position 292–298 (292–298) interacts with substrate; sequence TTTGRPR. GTP is bound by residues Arg298, 324-326, and 402-404; these read KLD and STG.

The protein belongs to the adenylosuccinate synthetase family. Homodimer. Mg(2+) serves as cofactor.

The protein resides in the cytoplasm. The enzyme catalyses IMP + L-aspartate + GTP = N(6)-(1,2-dicarboxyethyl)-AMP + GDP + phosphate + 2 H(+). Its pathway is purine metabolism; AMP biosynthesis via de novo pathway; AMP from IMP: step 1/2. In terms of biological role, plays an important role in the de novo pathway of purine nucleotide biosynthesis. Catalyzes the first committed step in the biosynthesis of AMP from IMP. The protein is Adenylosuccinate synthetase of Nautilia profundicola (strain ATCC BAA-1463 / DSM 18972 / AmH).